Here is a 242-residue protein sequence, read N- to C-terminus: uncharacterized protein (242 aa).

2 disordered regions span residues 16-121 and 152-178; these read GLYK…GAMA and PVRPAKLPKGKGRLRRPRQSRFKTQPV. Composition is skewed to pro residues over residues 50 to 64 and 97 to 113; these read PRPPTGPPARYPSPA and EPRPPPESPGAQPPPGP. Over residues 157-172 the composition is skewed to basic residues; it reads KLPKGKGRLRRPRQSR. Thr175 is modified (phosphothreonine). 5 positions are modified to phosphoserine: Ser192, Ser206, Ser216, Ser232, and Ser238. Residues 215–242 are disordered; the sequence is QSLSLQREPLGSCKLRNSLDSSDSDSAL. Residues 232–242 are compositionally biased toward low complexity; the sequence is SLDSSDSDSAL.

Its subcellular location is the cytoplasm. This is an uncharacterized protein from Rattus norvegicus (Rat).